The following is a 258-amino-acid chain: Alpha-hydroxynitrile lyase (258 aa).

Residues Ser-81 and His-236 each act as proton donor/acceptor in the active site.

It belongs to the AB hydrolase superfamily. Hydroxynitrile lyase family. In terms of assembly, homodimer.

It catalyses the reaction (R)-mandelonitrile = benzaldehyde + hydrogen cyanide. Its function is as follows. Involved in cyanogenesis, the release of HCN from injured tissues. Displays R-selective hydroxynitrile lyase activity. Also accepts nitromethane (MeNO2) as a donor in a reaction with aromatic aldehydes to yield (R)-beta-nitro alcohols. This is Alpha-hydroxynitrile lyase from Arabidopsis thaliana (Mouse-ear cress).